The primary structure comprises 436 residues: Histidine--tRNA ligase 1 (436 aa).

It belongs to the class-II aminoacyl-tRNA synthetase family. Homodimer.

The protein resides in the cytoplasm. It carries out the reaction tRNA(His) + L-histidine + ATP = L-histidyl-tRNA(His) + AMP + diphosphate + H(+). The chain is Histidine--tRNA ligase 1 from Bacillus cereus (strain ATCC 10987 / NRS 248).